A 737-amino-acid polypeptide reads, in one-letter code: Palmitoyltransferase akr1 (737 aa).

Residues 1 to 15 (MSSGNSSTGTHTNGN) are compositionally biased toward low complexity. Residues 1–39 (MSSGNSSTGTHTNGNFATLGSSPPSAVGGKGRAIPPKVT) form a disordered region. Over 1 to 313 (MSSGNSSTGT…WVRNKSLMSK (313 aa)) the chain is Cytoplasmic. ANK repeat units follow at residues 96 to 125 (EGIT…DVNA), 130 to 159 (SVAT…DPLL), 163 to 192 (QGYN…PVDV), 196 to 225 (QGHT…HANA), and 228 to 258 (EGGL…DKFA). 2 helical membrane passes run 314–334 (FFFL…SNMV) and 335–355 (VYAA…VAQK). Residues 356 to 374 (AASQGPSEYRILQKTPYLS) lie on the Cytoplasmic side of the membrane. The chain crosses the membrane as a helical span at residues 375–395 (GVFAGSLFWVGFRYVFYVLPV). The Lumenal portion of the chain corresponds to 396–401 (TYSTSP). A helical membrane pass occupies residues 402 to 422 (ILNGLFAIFFSLTTYFYIYSM). At 423–498 (VEDPGFVPKL…DNCVGANNLR (76 aa)) the chain is on the cytoplasmic side. One can recognise a DHHC domain in the interval 455–505 (NFCVSCMVRRPLRSKHCKRCARCVAKHDHHCPWIDNCVGANNLRHFVLYIT). Cys-485 (S-palmitoyl cysteine intermediate) is an active-site residue. A helical transmembrane segment spans residues 499–519 (HFVLYITCLEVGIVLFVQLTF). The Lumenal portion of the chain corresponds to 520 to 548 (NYINSLPAPAQPQCNIINETLCDFVLRDT). The chain crosses the membrane as a helical span at residues 549-569 (FTLVLDLWVCIQLVWITMLVA). Residues 570 to 737 (VQMIQISRNQ…LSVEDPEQGV (168 aa)) lie on the Cytoplasmic side of the membrane.

This sequence belongs to the DHHC palmitoyltransferase family. AKR/ZDHHC17 subfamily.

The protein resides in the early endosome membrane. Its subcellular location is the golgi apparatus membrane. The enzyme catalyses L-cysteinyl-[protein] + hexadecanoyl-CoA = S-hexadecanoyl-L-cysteinyl-[protein] + CoA. Functionally, palmitoyltransferase specific for casein kinase 1. In Aspergillus oryzae (strain ATCC 42149 / RIB 40) (Yellow koji mold), this protein is Palmitoyltransferase akr1 (akr1).